A 601-amino-acid polypeptide reads, in one-letter code: MLMHHDPLLPGAFSEELWQQVSKRLLAKVIEEFAYERVFGVVEEKPGHYRIDIDELQYRFKAKRYVFDNLSVDPASLFKRHGNSDAPLHDPLAFCAEVLPKLGVKPMTVAHFIKELGNTLVSDAHIAARASKTGAELAELDDICMEGETTGHPWVTVSKGRIGLGYSDYLAFTPENRTPTEVLWLGVSKERASFIAEETLTNEGLVREAVGVSRFESFCAKLAARGGSVDTHYMMPVHPWQWDHMIVPHFAADIAAGHIVFLGKGDDLYLPQQSVRTLSNISHPEKSTLKLCMTILNTAVYRGIPGKRALTAAPLTTWLDQLLARDQFLSEECGLVLLGERAGMHYVHPQFSTIEGAPYQFNEMLGCMWRDSLSAHLKSGETGLPLAALLHAGTDGKPVVQALAEKSGMTVSEWTARLFDVVIPPVFHLLAKHGLAFSAHGQNATLILKNGRPERLALRDFIDDVIVCDQAFPESATLPEEVRAVLLCLPADFLIHFIQTTLFICVFRYMSVLLDQRSGLPEHAFWGLARSSILAYQKRFPEMASRFATFDLFGDEYPRLCLNRVRLFTHGYADDDERPVPDFQGMVDNPLVAFDKRSNAA.

This sequence belongs to the IucA/IucC family.

It participates in siderophore biosynthesis; rhizobactin biosynthesis. In Rhizobium meliloti (strain 1021) (Ensifer meliloti), this protein is Rhizobactin siderophore biosynthesis protein RhbF (rhbF).